The primary structure comprises 1052 residues: Mitotic checkpoint serine/threonine-protein kinase BUB1 beta (1052 aa).

The region spanning 56–219 is the BUB1 N-terminal domain; the sequence is FESEIRFYSG…LEPSEPQRSS (164 aa). Positions 105-112 match the Nuclear localization signal motif; that stretch reads GETRYYND. The interval 146–179 is necessary for interaction with KNL1; the sequence is AQFYISWAEEYEARENFKKADIIFQEGIERKAEP. Disordered stretches follow at residues 206–256 and 272–327; these read EEEA…NAVP and ADTA…TSIP. The D-box signature appears at 217–225; sequence RSSLAELKS. Lys-243 is modified (N6-acetyllysine; by PCAF). Residue Ser-360 is modified to Phosphoserine. The tract at residues 361 to 381 is disordered; that stretch reads TRKPGREEGDPLQRVQSHQQG. At Ser-428 the chain carries Phosphoserine. A disordered region spans residues 496–552; that stretch reads SNPREISPAENILQEQPDSKGSSMPFSIFDESLSDKKDKSPATGGPQVLNAQRRPLS. Positions 508-520 are enriched in polar residues; that stretch reads LQEQPDSKGSSMP. Ser-535 and Ser-659 each carry phosphoserine. Position 665 is a phosphoserine; by PLK1 (Ser-665). Ser-686 carries the phosphoserine modification. In terms of domain architecture, Protein kinase spans 756 to 1040; it reads VIKQEHLTCD…TISPEALLTQ (285 aa). 762–770 serves as a coordination point for ATP; it reads LTCDDYRLF. Position 781 is a phosphothreonine; by PLK1 (Thr-781). Lys-784 serves as a coordination point for ATP. Asp-871 (proton acceptor) is an active-site residue. Phosphothreonine; by PLK1 is present on Thr-998. Phosphoserine occurs at positions 1033 and 1050.

Belongs to the protein kinase superfamily. Ser/Thr protein kinase family. BUB1 subfamily. Interacts with CENPE. Interacts with PLK1. Part of a complex containing BUB3, CDC20 and BUB1B. Interacts with anaphase-promoting complex/cyclosome (APC/C). Interacts with KNL1. Interacts with KAT2B. Interacts with RIPK3. Interacts with the closed conformation form of MAD2L1. Interacts with CDC20. Proteolytically cleaved by caspase-3 in a cell cycle specific manner. The cleavage might be involved in the durability of the cell cycle delay. In terms of processing, acetylation at Lys-243 regulates its degradation and timing in anaphase entry. Post-translationally, ubiquitinated. Degraded by the proteasome. Ubiquitinated by UBR5, promoting disassembly of the mitotic checkpoint complex from the APC/C complex. Sumoylated with SUMO2 and SUMO3. The sumoylation mediates the association with CENPE at the kinetochore. In terms of processing, autophosphorylated in vitro. Intramolecular autophosphorylation stimulated by CENPE. Phosphorylated during mitosis and hyperphosphorylated in mitotically arrested cells. Phosphorylation at Ser-659 and Ser-1033 occurs at kinetochores upon mitotic entry with dephosphorylation at the onset of anaphase. Post-translationally, proteolytically cleaved by caspase-3 in a cell cycle specific manner. The cleavage might be involved in the durability of the cell cycle delay. Caspase-3 cleavage is associated with abrogation of the mitotic checkpoint. The major site of cleavage is at Asp-603. As to expression, highly expressed in thymus followed by spleen.

Its subcellular location is the cytoplasm. It is found in the nucleus. The protein localises to the chromosome. It localises to the centromere. The protein resides in the kinetochore. It carries out the reaction L-seryl-[protein] + ATP = O-phospho-L-seryl-[protein] + ADP + H(+). The enzyme catalyses L-threonyl-[protein] + ATP = O-phospho-L-threonyl-[protein] + ADP + H(+). Its activity is regulated as follows. Kinase activity stimulated by CENPE. Functionally, essential component of the mitotic checkpoint. Required for normal mitosis progression and tumor suppression. The mitotic checkpoint delays anaphase until all chromosomes are properly attached to the mitotic spindle. One of its checkpoint functions is to inhibit the activity of the anaphase-promoting complex/cyclosome (APC/C) by blocking the binding of CDC20 to APC/C, independently of its kinase activity. The other is to monitor kinetochore activities that depend on the kinetochore motor CENPE. Required for kinetochore localization of CENPE. Negatively regulates PLK1 activity in interphase cells and suppresses centrosome amplification. Also implicated in triggering apoptosis in polyploid cells that exit aberrantly from mitotic arrest. Essential for tumor suppression. May play a role in regulating aging and fertility. The sequence is that of Mitotic checkpoint serine/threonine-protein kinase BUB1 beta (Bub1b) from Mus musculus (Mouse).